Consider the following 194-residue polypeptide: A-type ATP synthase subunit E (194 aa).

Belongs to the V-ATPase E subunit family. In terms of assembly, has multiple subunits with at least A(3), B(3), C, D, E, F, H, I and proteolipid K(x).

It localises to the cell membrane. Component of the A-type ATP synthase that produces ATP from ADP in the presence of a proton gradient across the membrane. This chain is A-type ATP synthase subunit E, found in Saccharolobus islandicus (strain M.16.27) (Sulfolobus islandicus).